Consider the following 266-residue polypeptide: Large ribosomal subunit protein uL2m (266 aa).

It belongs to the universal ribosomal protein uL2 family.

It localises to the mitochondrion. In Dictyostelium citrinum (Slime mold), this protein is Large ribosomal subunit protein uL2m (mrpl2).